Here is a 430-residue protein sequence, read N- to C-terminus: 3-phosphoshikimate 1-carboxyvinyltransferase (430 aa).

3-phosphoshikimate-binding residues include lysine 23, serine 24, and arginine 28. Residue lysine 23 participates in phosphoenolpyruvate binding. Phosphoenolpyruvate-binding residues include glycine 95 and arginine 123. Positions 169, 171, 315, and 342 each coordinate 3-phosphoshikimate. Glutamine 171 lines the phosphoenolpyruvate pocket. Catalysis depends on aspartate 315, which acts as the Proton acceptor. 2 residues coordinate phosphoenolpyruvate: arginine 346 and arginine 388.

Belongs to the EPSP synthase family. As to quaternary structure, monomer.

Its subcellular location is the cytoplasm. The enzyme catalyses 3-phosphoshikimate + phosphoenolpyruvate = 5-O-(1-carboxyvinyl)-3-phosphoshikimate + phosphate. Its pathway is metabolic intermediate biosynthesis; chorismate biosynthesis; chorismate from D-erythrose 4-phosphate and phosphoenolpyruvate: step 6/7. In terms of biological role, catalyzes the transfer of the enolpyruvyl moiety of phosphoenolpyruvate (PEP) to the 5-hydroxyl of shikimate-3-phosphate (S3P) to produce enolpyruvyl shikimate-3-phosphate and inorganic phosphate. This chain is 3-phosphoshikimate 1-carboxyvinyltransferase, found in Streptococcus pyogenes serotype M6 (strain ATCC BAA-946 / MGAS10394).